A 230-amino-acid polypeptide reads, in one-letter code: Large ribosomal subunit protein bL25 (230 aa).

Belongs to the bacterial ribosomal protein bL25 family. CTC subfamily. As to quaternary structure, part of the 50S ribosomal subunit; part of the 5S rRNA/L5/L18/L25 subcomplex. Contacts the 5S rRNA. Binds to the 5S rRNA independently of L5 and L18.

This is one of the proteins that binds to the 5S RNA in the ribosome where it forms part of the central protuberance. The protein is Large ribosomal subunit protein bL25 (rplY) of Rhodopseudomonas palustris (strain ATCC BAA-98 / CGA009).